The sequence spans 119 residues: Small ribosomal subunit protein uS13 (119 aa).

Residues 94 to 113 show a composition bias toward basic residues; that stretch reads GLPVRGQRTKTNARTRKGPR. The segment at 94–119 is disordered; that stretch reads GLPVRGQRTKTNARTRKGPRKAIGAK.

The protein belongs to the universal ribosomal protein uS13 family. In terms of assembly, part of the 30S ribosomal subunit. Forms a loose heterodimer with protein S19. Forms two bridges to the 50S subunit in the 70S ribosome.

In terms of biological role, located at the top of the head of the 30S subunit, it contacts several helices of the 16S rRNA. In the 70S ribosome it contacts the 23S rRNA (bridge B1a) and protein L5 of the 50S subunit (bridge B1b), connecting the 2 subunits; these bridges are implicated in subunit movement. Contacts the tRNAs in the A and P-sites. In Nitrosomonas europaea (strain ATCC 19718 / CIP 103999 / KCTC 2705 / NBRC 14298), this protein is Small ribosomal subunit protein uS13.